A 655-amino-acid polypeptide reads, in one-letter code: Probable replication restart protein PriA (655 aa).

Positions 368, 371, 377, 380, 396, 399, 408, and 411 each coordinate Zn(2+).

It belongs to the helicase family. PriA subfamily. In terms of assembly, component of the replication restart primosome. The cofactor is Zn(2+).

In terms of biological role, initiates the restart of stalled replication forks, which reloads the replicative helicase on sites other than the origin of replication. Recognizes and binds to abandoned replication forks and remodels them to uncover a helicase loading site. Promotes assembly of the primosome at these replication forks. In Mycobacterium bovis (strain ATCC BAA-935 / AF2122/97), this protein is Probable replication restart protein PriA.